Here is a 190-residue protein sequence, read N- to C-terminus: Interferon alpha-11 (190 aa).

An N-terminal signal peptide occupies residues 1 to 23 (MARLCAFLMILIVMSYWSTCSLG). 2 disulfide bridges follow: Cys24/Cys122 and Cys52/Cys162. Asn101 is a glycosylation site (N-linked (GlcNAc...) asparagine).

The protein belongs to the alpha/beta interferon family. In terms of processing, N-glycosylated.

The protein resides in the secreted. Functionally, has antiviral and antiproliferative activities. Produced by macrophages and stimulates the production of two enzymes: a protein kinase and an oligoadenylate synthetase. During viral infection, mediates antiviral effect, either directly by inducing interferon-stimulated genes, either indirectly through stimulation of natural killer cells enabling them to control viral replication. This chain is Interferon alpha-11 (Ifna11), found in Mus musculus (Mouse).